The chain runs to 497 residues: Di-/tripeptide transporter (497 aa).

The Cytoplasmic portion of the chain corresponds to 1 to 36; that stretch reads MQNLNKTEKTFFGQPRGLLTLFQTEFWERFSYYGMR. Residues 37 to 55 traverse the membrane as a helical segment; sequence AILVYYLYALTTADNAGLG. At 56–64 the chain is on the extracellular side; the sequence is LPKAQAMAI. Residues 65-83 form a helical membrane-spanning segment; that stretch reads VSIYGALVYLSTIVGGWVA. The Cytoplasmic segment spans residues 84–92; sequence DRLLGASRT. Residues 93–111 traverse the membrane as a helical segment; the sequence is IFLGGILITLGHIALATPF. The Extracellular portion of the chain corresponds to 112–115; sequence GLSS. A helical membrane pass occupies residues 116–134; that stretch reads LFVALFLIILGTGMLKPNI. At 135–154 the chain is on the cytoplasmic side; sequence SNMVGHLYSKDDSRRDTGFN. A helical transmembrane segment spans residues 155–173; sequence IFVVGINMGSLIAPLIVGT. The Extracellular segment spans residues 174–181; sequence VGQGVNYH. A helical membrane pass occupies residues 182–200; the sequence is LGFSLAAIGMIFALFAYWY. At 201–224 the chain is on the cytoplasmic side; sequence GRLRHFPEIGREPSNPMDSKARRN. The helical transmembrane segment at 225-243 threads the bilayer; sequence FLITLTIVVIVAIIGFFLL. Over 244–254 the chain is Extracellular; the sequence is YQASPANFINN. A helical membrane pass occupies residues 255–273; it reads FINVLSIIGIVVPIIYFVM. The Cytoplasmic portion of the chain corresponds to 274-293; it reads MFTSKKVESDERRKLTAYIP. The chain crosses the membrane as a helical span at residues 294 to 312; the sequence is LFLSAIVFWAIEEQSSTII. Topologically, residues 313 to 335 are extracellular; the sequence is AVWGESRSNLDPTWFGITFHIDP. A helical membrane pass occupies residues 336-354; sequence SWYQLLNPLFIVLLSPIFV. At 355 to 372 the chain is on the cytoplasmic side; it reads RLWNKLGERQPSTIVKFG. The helical transmembrane segment at 373 to 391 threads the bilayer; it reads LGLMLTGISYLIMTLPGLL. The Extracellular segment spans residues 392 to 425; sequence NGTSGRASALWLVLMFAVQMAGELLVSPVGLSVS. The helical transmembrane segment at 426-444 threads the bilayer; sequence TKLAPVAFQSQMMAMWFLA. Residues 445–497 lie on the Cytoplasmic side of the membrane; it reads DSTSQAINAQITPLFKAATEVHFFAITGIIGIIVGIILLIVKKPILKLMGDVR.

It belongs to the major facilitator superfamily. Proton-dependent oligopeptide transporter (POT/PTR) (TC 2.A.17) family.

It localises to the cell membrane. Proton-dependent uptake of di- or tri-peptides. The chain is Di-/tripeptide transporter (dtpT) from Lactococcus lactis subsp. lactis (strain IL1403) (Streptococcus lactis).